Here is a 507-residue protein sequence, read N- to C-terminus: ATP synthase subunit alpha (507 aa).

170–177 (GDRKTGKT) is an ATP binding site.

This sequence belongs to the ATPase alpha/beta chains family. F-type ATPases have 2 components, CF(1) - the catalytic core - and CF(0) - the membrane proton channel. CF(1) has five subunits: alpha(3), beta(3), gamma(1), delta(1), epsilon(1). CF(0) has three main subunits: a(1), b(2) and c(9-12). The alpha and beta chains form an alternating ring which encloses part of the gamma chain. CF(1) is attached to CF(0) by a central stalk formed by the gamma and epsilon chains, while a peripheral stalk is formed by the delta and b chains.

The protein localises to the cell inner membrane. The catalysed reaction is ATP + H2O + 4 H(+)(in) = ADP + phosphate + 5 H(+)(out). Its function is as follows. Produces ATP from ADP in the presence of a proton gradient across the membrane. The alpha chain is a regulatory subunit. The sequence is that of ATP synthase subunit alpha from Anaplasma marginale (strain Florida).